A 134-amino-acid chain; its full sequence is Agouti-related protein (134 aa).

The N-terminal stretch at 1-20 (MLTAVLLSCALLLAMPPLQG) is a signal peptide. The propeptide occupies 21 to 84 (AQMGPAPLEG…VLDPEGRKPR (64 aa)). 5 disulfides stabilise this stretch: Cys89–Cys104, Cys96–Cys110, Cys103–Cys121, Cys107–Cys131, and Cys112–Cys119. Positions 89 to 131 (CVRLHESCLGHQVPCCDPCATCYCRFFNAFCYCRKLGTTTNPC) constitute an Agouti domain. The segment at 113–115 (RFF) is interaction with melanocortin receptors.

In terms of assembly, interacts with melanocortin receptors MC3R, MC4R and MC5R.

It localises to the secreted. The protein localises to the golgi apparatus lumen. In terms of biological role, plays a role in weight homeostasis. Involved in the control of feeding behavior through the central melanocortin system. Acts as alpha melanocyte-stimulating hormone antagonist by inhibiting cAMP production mediated by stimulation of melanocortin receptors within the hypothalamus and adrenal gland. Has very low activity with MC5R. Is an inverse agonist for MC3R and MC4R being able to suppress their constitutive activity. It promotes MC3R and MC4R endocytosis in an arrestin-dependent manner. In Bos taurus (Bovine), this protein is Agouti-related protein (AGRP).